A 169-amino-acid chain; its full sequence is Putative tRNA (cytidine(34)-2'-O)-methyltransferase (169 aa).

S-adenosyl-L-methionine contacts are provided by isoleucine 79, glycine 104, isoleucine 125, and serine 133.

It belongs to the class IV-like SAM-binding methyltransferase superfamily. RNA methyltransferase TrmH family. TrmL subfamily.

Its subcellular location is the cytoplasm. It carries out the reaction cytidine(34) in tRNA + S-adenosyl-L-methionine = 2'-O-methylcytidine(34) in tRNA + S-adenosyl-L-homocysteine + H(+). It catalyses the reaction 5-carboxymethylaminomethyluridine(34) in tRNA(Leu) + S-adenosyl-L-methionine = 5-carboxymethylaminomethyl-2'-O-methyluridine(34) in tRNA(Leu) + S-adenosyl-L-homocysteine + H(+). Functionally, could methylate the ribose at the nucleotide 34 wobble position in tRNA. This is Putative tRNA (cytidine(34)-2'-O)-methyltransferase from Listeria monocytogenes serotype 4b (strain F2365).